Consider the following 107-residue polypeptide: UPF0145 protein LVIS_1527 (107 aa).

Belongs to the UPF0145 family.

This is UPF0145 protein LVIS_1527 from Levilactobacillus brevis (strain ATCC 367 / BCRC 12310 / CIP 105137 / JCM 1170 / LMG 11437 / NCIMB 947 / NCTC 947) (Lactobacillus brevis).